Consider the following 484-residue polypeptide: Tyramine receptor 1 (484 aa).

Residues 1–54 (MVRVELQAASLMNGSSAAEEPQDALVGGDACGGRRPPSVLGVRLAVPEWEVAVT) lie on the Extracellular side of the membrane. N13 carries N-linked (GlcNAc...) asparagine glycosylation. Residues 55–77 (AVSLSLIILITIVGNVLVVLSVF) traverse the membrane as a helical segment. At 78 to 87 (TYKPLRIVQN) the chain is on the cytoplasmic side. The chain crosses the membrane as a helical span at residues 88 to 109 (FFIVSLAVADLTVAVLVMPFNV). Residues 110–126 (AYSLIQRWVFGIVVCKM) are Extracellular-facing. C124 and C203 are joined by a disulfide. Residues 127–147 (WLTCDVLCCTASILNLCAIAL) traverse the membrane as a helical segment. Residues 148 to 167 (DRYWAITDPINYAQKRTLRR) are Cytoplasmic-facing. The chain crosses the membrane as a helical span at residues 168-190 (VLAMIAGVWLLSGVISSPPLIGW). The Extracellular portion of the chain corresponds to 191 to 215 (NDWPMEFNDTTPCQLTEEQGYVIYS). The N-linked (GlcNAc...) asparagine glycan is linked to N198. The chain crosses the membrane as a helical span at residues 216-237 (SLGSFFIPLFIMTIVYVEIFIA). Topologically, residues 238 to 411 (TKRRLRERAK…LSKERRAART (174 aa)) are cytoplasmic. A compositionally biased stretch (polar residues) spans 253 to 280 (SAMKQQMAAQAVPSSVPSHDQESVSSET). Disordered regions lie at residues 253-322 (SAMK…PAMV) and 358-383 (TTTA…PTPV). The segment covering 295–306 (EKRRKTKKKSKK) has biased composition (basic residues). Over residues 361 to 378 (AVTDSPRSRTASQKGSTA) the composition is skewed to polar residues. A helical transmembrane segment spans residues 412–433 (LGIIMGVFVVCWLPFFLMYVIV). The Extracellular portion of the chain corresponds to 434–448 (PFCNPSCKPSPKLVN). A helical membrane pass occupies residues 449–470 (FITWLGYINSALNPIIYTIFNL). Residues 471–484 (DFRRAFKKLLHFKT) are Cytoplasmic-facing.

Belongs to the G-protein coupled receptor 1 family. As to expression, present mainly in the central nervous system, especially in the supra- and subesophageal, thoracic and abdominal ganglia. Not found in the distal part of optic lobes.

It localises to the cell membrane. G-protein coupled receptor for tyramine, a known neurotransmitter and neuromodulator and direct precursor of octopamine. The rank order of potency for agonists of this receptor is tyramine &gt; naphazoline &gt; tolazoline &gt; DL-octopamine &gt; dopamine &gt; epinephrine &gt; 5-hydroxytryptamine. For antagonists, the rank order is yohimbine &gt; chlorpromazine &gt; mianserin &gt; phentolamine &gt; metoclopramide. The polypeptide is Tyramine receptor 1 (GCR1) (Locusta migratoria (Migratory locust)).